Here is a 214-residue protein sequence, read N- to C-terminus: MGQKVNPISFRLVRTRDWRSKWFANKKEFGDLLVEDQIIRAYLLKKPALVGVSAIKIKRMSGKVEVTIVTARPGLVIGKKGAEIDVLKGELSKLTGKEVWVAVEEVKRPDMDAKIVADSIAKQLERRIPFRRAMKKAMQSSIDAGAFGIKVQLSGRIGGAEIARTEWYKEGSTPLHTLRADIDYATGRAETTYGSIGVKVWIYRGEDNLAKKEA.

The 69-residue stretch at 39–107 (IRAYLLKKPA…EVWVAVEEVK (69 aa)) folds into the KH type-2 domain.

Belongs to the universal ribosomal protein uS3 family. Part of the 30S ribosomal subunit. Forms a tight complex with proteins S10 and S14.

Binds the lower part of the 30S subunit head. Binds mRNA in the 70S ribosome, positioning it for translation. This Protochlamydia amoebophila (strain UWE25) protein is Small ribosomal subunit protein uS3.